The chain runs to 184 residues: Putative rRNA methyltransferase YlbH (184 aa).

The segment at 1–22 (MRVISGSKKGRSLKAVAGTSTR) is disordered.

This sequence belongs to the methyltransferase superfamily. RsmD family.

May catalyze the S-adenosyl-L-methionine-dependent methylation of a specific base in rRNA. In Bacillus subtilis (strain 168), this protein is Putative rRNA methyltransferase YlbH (ylbH).